A 352-amino-acid chain; its full sequence is Mitochondrial ubiquitin ligase activator of NFKB 1 (352 aa).

Residues 1–8 lie on the Cytoplasmic side of the membrane; it reads MESGSRPS. Residues 9-29 traverse the membrane as a helical segment; the sequence is LGQVILLGTSSMVTAVLYSIY. At 30–238 the chain is on the mitochondrial intermembrane side; that stretch reads RQKAQVAQEL…LLHRQESSVR (209 aa). Lysine 52 participates in a covalent cross-link: Glycyl lysine isopeptide (Lys-Gly) (interchain with G-Cter in ubiquitin). The helical transmembrane segment at 239–259 threads the bilayer; it reads LWKILVLVFGFATCATLFFIL. Topologically, residues 260–352 are cytoplasmic; it reads RKQYLHRQER…ITRVIPLYNS (93 aa). Lysine 299 participates in a covalent cross-link: Glycyl lysine isopeptide (Lys-Gly) (interchain with G-Cter in ubiquitin). An RING-type zinc finger spans residues 302 to 340; that stretch reads CVVCLSNFKSCVFLECGHVCSCRQCYLALPEPKRCPICR.

In terms of assembly, homooligomer. Interacts with MAP3K7/TAK1. Interacts with UBC9. Interacts with and sumoylates DNM1L. Interacts with MAVS. Interacts with TP53 (via N-terminus); the interaction leads to ubiquitination and proteasomal degradation of TP53. Post-translationally, ubiquitinated by PRKN during mitophagy, leading to its degradation and enhancement of mitophagy. Deubiquitinated by USP30. As to expression, expressed in cortical neurons (at protein level).

The protein localises to the mitochondrion outer membrane. It is found in the peroxisome. It catalyses the reaction S-ubiquitinyl-[E2 ubiquitin-conjugating enzyme]-L-cysteine + [acceptor protein]-L-lysine = [E2 ubiquitin-conjugating enzyme]-L-cysteine + N(6)-ubiquitinyl-[acceptor protein]-L-lysine.. Its pathway is protein modification; protein ubiquitination. It participates in protein modification; protein sumoylation. Exhibits weak E3 ubiquitin-protein ligase activity. E3 ubiquitin ligases accept ubiquitin from an E2 ubiquitin-conjugating enzyme in the form of a thioester and then directly transfer the ubiquitin to targeted substrates. Can ubiquitinate AKT1 preferentially at 'Lys-284' involving 'Lys-48'-linked polyubiquitination and seems to be involved in regulation of Akt signaling by targeting phosphorylated Akt to proteasomal degradation. Mediates polyubiquitination of cytoplasmic TP53 at 'Lys-27' which targets TP53 for proteasomal degradation, thus reducing TP53 levels in the cytoplasm and mitochondrion. Proposed to preferentially act as a SUMO E3 ligase at physiological concentrations. Plays a role in the control of mitochondrial morphology by promoting mitochondrial fragmentation, and influences mitochondrial localization. Likely to promote mitochondrial fission through negatively regulating the mitochondrial fusion proteins MFN1 and MFN2, acting in a pathway that is parallel to the PRKN/PINK1 regulatory pathway. May also be involved in the sumoylation of the membrane fission protein DNM1L. Inhibits cell growth. When overexpressed, activates JNK through MAP3K7/TAK1 and induces caspase-dependent apoptosis. Involved in the modulation of innate immune defense against viruses by inhibiting RIGI-dependent antiviral response. Can mediate RIGI sumoylation and disrupt its polyubiquitination. This is Mitochondrial ubiquitin ligase activator of NFKB 1 (Mul1) from Mus musculus (Mouse).